Consider the following 166-residue polypeptide: Ribosome maturation factor RimM (166 aa).

Residues 94 to 166 enclose the PRC barrel domain; it reads EDEFYITDLN…AILNYKRDEL (73 aa).

This sequence belongs to the RimM family. Binds ribosomal protein uS19.

The protein resides in the cytoplasm. An accessory protein needed during the final step in the assembly of 30S ribosomal subunit, possibly for assembly of the head region. Essential for efficient processing of 16S rRNA. May be needed both before and after RbfA during the maturation of 16S rRNA. It has affinity for free ribosomal 30S subunits but not for 70S ribosomes. The protein is Ribosome maturation factor RimM of Rickettsia bellii (strain RML369-C).